The sequence spans 270 residues: Chromo domain-containing protein cec-4 (270 aa).

Disordered regions lie at residues 1–24 and 143–229; these read MAKKTVEGEHGTPKTNFTKKETSK and KIAQ…KNDV. Residues 87 to 147 enclose the Chromo domain; that stretch reads YAVERVLAHR…HQEDLKIAQT (61 aa). Basic residues-rich tracts occupy residues 151-167 and 187-197; these read TPSKTPKKTPKSLKRRA and TPKQSTKKLKR. Over residues 205 to 229 the composition is skewed to basic and acidic residues; the sequence is LVEKSKKKAIPDLENHTLDQEKNDV.

As to quaternary structure, interacts with mono-, di- and tri-methylated 'Lys-9' residues on histone H3. Weakly interacts with methylated 'Lys-37' residues on histone H3.

It is found in the nucleus inner membrane. Its subcellular location is the membrane. Its function is as follows. Chromatin anchor protein which binds to methylated lysine residues on histone H3, thereby recruiting heterochromatin to the nuclear periphery, especially in embryonic cells, with a lesser role in differentiated cells. May be required for the correct positioning of chromatin and nucleoli in embryos. The sequence is that of Chromo domain-containing protein cec-4 from Caenorhabditis elegans.